Reading from the N-terminus, the 278-residue chain is Protein Rv2133c (278 aa).

This is Protein Rv2133c from Mycobacterium tuberculosis (strain ATCC 25618 / H37Rv).